A 444-amino-acid chain; its full sequence is Maltoporin (444 aa).

Residues 1–24 form the signal peptide; it reads MITLRKVPLALAIAAGILSAQAGA.

It belongs to the porin LamB (TC 1.B.3) family. As to quaternary structure, homotrimer formed of three 18-stranded antiparallel beta-barrels, containing three independent channels.

It localises to the cell outer membrane. It catalyses the reaction beta-maltose(in) = beta-maltose(out). Involved in the transport of maltose and maltodextrins. This is Maltoporin from Enterobacter sp. (strain 638).